A 132-amino-acid chain; its full sequence is Small ribosomal subunit protein uS8 (132 aa).

The protein belongs to the universal ribosomal protein uS8 family. As to quaternary structure, part of the 30S ribosomal subunit. Contacts proteins S5 and S12.

Functionally, one of the primary rRNA binding proteins, it binds directly to 16S rRNA central domain where it helps coordinate assembly of the platform of the 30S subunit. In Staphylococcus carnosus (strain TM300), this protein is Small ribosomal subunit protein uS8.